The chain runs to 490 residues: MTAPVIMVLGTASSVGKSVLVTALCRLARQRGLRVAPFKAQNMSNNAAVTADGREIARSVAVQAAAAQIEPTVEMNPILIKPEGQRRSQIVVEGRPWRTLDALDFWRRKEMLWEIVTRNLDALRARCDLVIAEGAGSPVELNLKAGDIVNMRVARYVGARCVLVGDIDTGGIFAQLLGTLMLLEPEERELVQGLLVNRFRGDPALFEDGVRILEQRSGLPVLGVIPWFEDLHLPEEDAVALERGNRLARDGLTIAVIHLPAIANFDDFDPLAREPGVTLRYITHPDDLSDAVAVILPGTKHTLAARRWLRERGFDVALHQFPGSIVGICGGYQLLGERISDPLGVEGQGGDEPGLGLLPVETIFSAAKLTVQADAVSRAPWAVGARLHGYEIHMGRTRSIDADRPLITVTQRGADAVEEHDGHISKDGRVWGCYLHGIFANDAFRRGWLQHLGWHPGEELNPSTDPFDHLAQHVAAAIGEKQVRWLFDIG.

Positions 251-444 (GLTIAVIHLP…LHGIFANDAF (194 aa)) constitute a GATase cobBQ-type domain. Residue Cys-329 is the Nucleophile of the active site. Residue His-436 is part of the active site.

Belongs to the CobB/CobQ family. CobQ subfamily.

It participates in cofactor biosynthesis; adenosylcobalamin biosynthesis. Catalyzes amidations at positions B, D, E, and G on adenosylcobyrinic A,C-diamide. NH(2) groups are provided by glutamine, and one molecule of ATP is hydrogenolyzed for each amidation. This Roseiflexus castenholzii (strain DSM 13941 / HLO8) protein is Cobyric acid synthase.